A 317-amino-acid polypeptide reads, in one-letter code: Probable arabinan endo-1,5-alpha-L-arabinosidase C (317 aa).

The signal sequence occupies residues 1 to 17 (MLSFLAALSLPLALVNA). D32 acts as the Proton acceptor in catalysis. N-linked (GlcNAc...) asparagine glycosylation is present at N190. The active-site Proton donor is E198.

It belongs to the glycosyl hydrolase 43 family.

It is found in the secreted. It carries out the reaction Endohydrolysis of (1-&gt;5)-alpha-arabinofuranosidic linkages in (1-&gt;5)-arabinans.. It functions in the pathway glycan metabolism; L-arabinan degradation. Endo-1,5-alpha-L-arabinanase involved in degradation of pectin. Its preferred substrate is linear 1,5-alpha-L-arabinan. This Aspergillus flavus (strain ATCC 200026 / FGSC A1120 / IAM 13836 / NRRL 3357 / JCM 12722 / SRRC 167) protein is Probable arabinan endo-1,5-alpha-L-arabinosidase C (abnC).